A 557-amino-acid polypeptide reads, in one-letter code: Small ribosomal subunit protein bS1 (557 aa).

6 S1 motif domains span residues 21-87 (GSIV…LSRE), 105-171 (SATV…VSRR), 192-260 (GMEV…LGLK), 277-347 (GTKL…LGLK), 364-434 (GDRV…LGVK), and 451-520 (GAIV…LSIR).

Belongs to the bacterial ribosomal protein bS1 family.

Binds mRNA; thus facilitating recognition of the initiation point. It is needed to translate mRNA with a short Shine-Dalgarno (SD) purine-rich sequence. The chain is Small ribosomal subunit protein bS1 (rpsA) from Dickeya dadantii (strain 3937) (Erwinia chrysanthemi (strain 3937)).